The chain runs to 111 residues: Nucleoid-associated protein NGK_1136 (111 aa).

This sequence belongs to the YbaB/EbfC family. In terms of assembly, homodimer.

The protein resides in the cytoplasm. Its subcellular location is the nucleoid. Binds to DNA and alters its conformation. May be involved in regulation of gene expression, nucleoid organization and DNA protection. The chain is Nucleoid-associated protein NGK_1136 from Neisseria gonorrhoeae (strain NCCP11945).